A 100-amino-acid polypeptide reads, in one-letter code: Small ribosomal subunit protein uS14 (100 aa).

It belongs to the universal ribosomal protein uS14 family. In terms of assembly, part of the 30S ribosomal subunit. Contacts proteins S3 and S10.

Its function is as follows. Binds 16S rRNA, required for the assembly of 30S particles and may also be responsible for determining the conformation of the 16S rRNA at the A site. This Rippkaea orientalis (strain PCC 8801 / RF-1) (Cyanothece sp. (strain PCC 8801)) protein is Small ribosomal subunit protein uS14.